The following is a 107-amino-acid chain: MYAIIETGGKQYKVSEGDTIAVEKLSVKQGEQIVFERILHLSTDGTVKIGQPYVEGCTVKGTVLSHERARKVVVVKYRPRKNYRRERGHRQWFSLVKIDKIEIEKTS.

The protein belongs to the bacterial ribosomal protein bL21 family. Part of the 50S ribosomal subunit. Contacts protein L20.

This protein binds to 23S rRNA in the presence of protein L20. This Pseudothermotoga lettingae (strain ATCC BAA-301 / DSM 14385 / NBRC 107922 / TMO) (Thermotoga lettingae) protein is Large ribosomal subunit protein bL21.